The sequence spans 335 residues: Probable phosphoglycerate mutase ARB_03491 (335 aa).

Residues 1-24 (MAGRILLGLTLLATSLPLLAMGDA) form the signal peptide. The Tele-phosphohistidine intermediate role is filled by His-108. Glu-211 acts as the Proton donor/acceptor in catalysis.

Belongs to the phosphoglycerate mutase family.

Its subcellular location is the secreted. Functionally, probable phosphomutase that may have a function related to the manipulation of phosphate groups on carbohydrates. This Arthroderma benhamiae (strain ATCC MYA-4681 / CBS 112371) (Trichophyton mentagrophytes) protein is Probable phosphoglycerate mutase ARB_03491.